We begin with the raw amino-acid sequence, 308 residues long: Elongation factor Ts (308 aa).

The segment at 80–83 is involved in Mg(2+) ion dislocation from EF-Tu; the sequence is TDFV.

Belongs to the EF-Ts family.

Its subcellular location is the cytoplasm. Functionally, associates with the EF-Tu.GDP complex and induces the exchange of GDP to GTP. It remains bound to the aminoacyl-tRNA.EF-Tu.GTP complex up to the GTP hydrolysis stage on the ribosome. The sequence is that of Elongation factor Ts from Erythrobacter litoralis (strain HTCC2594).